The sequence spans 265 residues: Diphthine synthase (265 aa).

S-adenosyl-L-methionine-binding positions include L10, D87, V90, 115–116, L166, A209, and H234; that span reads SI.

Belongs to the diphthine synthase family. As to quaternary structure, homodimer.

The enzyme catalyses 2-[(3S)-amino-3-carboxypropyl]-L-histidyl-[translation elongation factor 2] + 3 S-adenosyl-L-methionine = diphthine-[translation elongation factor 2] + 3 S-adenosyl-L-homocysteine + 3 H(+). It functions in the pathway protein modification; peptidyl-diphthamide biosynthesis. Functionally, S-adenosyl-L-methionine-dependent methyltransferase that catalyzes the trimethylation of the amino group of the modified target histidine residue in translation elongation factor 2 (EF-2), to form an intermediate called diphthine. The three successive methylation reactions represent the second step of diphthamide biosynthesis. In Pyrococcus horikoshii (strain ATCC 700860 / DSM 12428 / JCM 9974 / NBRC 100139 / OT-3), this protein is Diphthine synthase.